The primary structure comprises 97 residues: Co-chaperonin GroES (97 aa).

Belongs to the GroES chaperonin family. Heptamer of 7 subunits arranged in a ring. Interacts with the chaperonin GroEL.

Its subcellular location is the cytoplasm. Functionally, together with the chaperonin GroEL, plays an essential role in assisting protein folding. The GroEL-GroES system forms a nano-cage that allows encapsulation of the non-native substrate proteins and provides a physical environment optimized to promote and accelerate protein folding. GroES binds to the apical surface of the GroEL ring, thereby capping the opening of the GroEL channel. This is Co-chaperonin GroES from Buchnera aphidicola subsp. Pemphigus spyrothecae.